The primary structure comprises 1040 residues: Multidrug resistance protein MdtB (1040 aa).

Helical transmembrane passes span 16-36 (FIMR…AGII), 347-367 (LMMA…NIPA), 369-389 (IIPG…MVFL), 396-416 (LTLM…IVVI), 440-460 (IGFT…PLLF), 472-492 (FAIT…TLTP), 537-557 (WLTL…WVFI), 863-883 (LGST…VLGI), 888-908 (FIHP…ALLA), 911-931 (IAGS…IGIV), 968-988 (ILMT…STGV), and 998-1018 (IGMV…TPVI).

It belongs to the resistance-nodulation-cell division (RND) (TC 2.A.6) family. MdtB subfamily. In terms of assembly, part of a tripartite efflux system composed of MdtA, MdtB and MdtC. MdtB forms a heteromultimer with MdtC.

The protein localises to the cell inner membrane. In terms of biological role, the MdtABC tripartite complex confers resistance against novobiocin and deoxycholate. This is Multidrug resistance protein MdtB from Escherichia coli (strain 55989 / EAEC).